A 303-amino-acid polypeptide reads, in one-letter code: MATH domain and coiled-coil domain-containing protein At3g58250 (303 aa).

The region spanning lysine 8 to isoleucine 135 is the MATH domain. Positions lysine 231–alanine 287 form a coiled coil.

This is MATH domain and coiled-coil domain-containing protein At3g58250 from Arabidopsis thaliana (Mouse-ear cress).